The sequence spans 140 residues: Smith-Magenis syndrome chromosomal region candidate gene 5 protein (140 aa).

The segment at 43–77 (CTGPSSQAPPQPPQASPPAAADHSRTPSLLASSHS) is disordered. Residues 49-58 (QAPPQPPQAS) are compositionally biased toward pro residues.

Widely expressed.

This Homo sapiens (Human) protein is Smith-Magenis syndrome chromosomal region candidate gene 5 protein (SMCR5).